A 142-amino-acid polypeptide reads, in one-letter code: Large ribosomal subunit protein uL13 (142 aa).

Belongs to the universal ribosomal protein uL13 family. As to quaternary structure, part of the 50S ribosomal subunit.

Functionally, this protein is one of the early assembly proteins of the 50S ribosomal subunit, although it is not seen to bind rRNA by itself. It is important during the early stages of 50S assembly. The protein is Large ribosomal subunit protein uL13 of Actinobacillus pleuropneumoniae serotype 5b (strain L20).